A 212-amino-acid chain; its full sequence is Acyl-homoserine-lactone synthase (212 aa).

It belongs to the autoinducer synthase family.

It catalyses the reaction a fatty acyl-[ACP] + S-adenosyl-L-methionine = an N-acyl-L-homoserine lactone + S-methyl-5'-thioadenosine + holo-[ACP] + H(+). Functionally, required for the synthesis of OHHL (N-(3-oxohexanoyl)-L-homoserine lactone), an autoinducer molecule which binds to the EchR transcriptional regulator. The polypeptide is Acyl-homoserine-lactone synthase (echI) (Dickeya chrysanthemi (Pectobacterium chrysanthemi)).